A 316-amino-acid chain; its full sequence is Secreted effector protein SifB (316 aa).

It belongs to the Sif family.

The protein localises to the secreted. Its subcellular location is the host cytoplasm. Effector proteins function to alter host cell physiology and promote bacterial survival in host tissues. The sequence is that of Secreted effector protein SifB (sifB) from Salmonella typhimurium (strain LT2 / SGSC1412 / ATCC 700720).